Consider the following 424-residue polypeptide: Choline-phosphate cytidylyltransferase (424 aa).

The interval 1–70 (MANPTTGKSS…RKRRRLTKEF (70 aa)) is disordered. Residues 14–24 (KLSNSSLSNLF) show a composition bias toward low complexity. Ser-16 carries the post-translational modification Phosphoserine. The span at 35–44 (ETEEQDNEDK) shows a compositional bias: acidic residues. Over residues 45-55 (DESKNQDENKD) the composition is skewed to basic and acidic residues. Position 59 is a phosphothreonine (Thr-59). CTP-binding positions include 111–119 (VFDLFHLGH) and Lys-149. Positions 149 and 178 each coordinate substrate. Residues 195–196 (HD), Tyr-200, and 223–227 (RTNGV) each bind CTP. A Phosphoserine modification is found at Ser-346. The segment at 348–424 (ATEFANEFTG…LTQKKKQSAN (77 aa)) is disordered. Over residues 381-398 (NSNNTNTNSDSDSNTNST) the composition is skewed to low complexity. Ser-401 carries the post-translational modification Phosphoserine; by CK2.

This sequence belongs to the cytidylyltransferase family.

The protein resides in the membrane. The catalysed reaction is phosphocholine + CTP + H(+) = CDP-choline + diphosphate. It participates in phospholipid metabolism; phosphatidylcholine biosynthesis; phosphatidylcholine from phosphocholine: step 1/2. Functionally, catalyzes the key rate-limiting step in the CDP-choline pathway for phosphatidylcholine biosynthesis. The sequence is that of Choline-phosphate cytidylyltransferase (PCT1) from Saccharomyces cerevisiae (strain ATCC 204508 / S288c) (Baker's yeast).